A 901-amino-acid chain; its full sequence is MTTQLNINSVIENAKRVITPLSPISIFAARNPWEGLEADTFEDVAKWLRDVRDVDIFPNKALIESAVARGELDESVFNQLVTDMLLEHHYNIPQHYINLYIDNIKTLKDVPASYMNHSNVDVVADLLLEKSKRDMAESYHHYDVRPMSDAIIDEQGEPLSEQVNRQMIKWTKLYIDQFLSSWTMPKREQSFYHAWLHLAQHDHSFTKAQRQVIKGLPNDPEMTIESVLTYFSIDQEDYQAYVEGHLLALPGWAGMLYYRSQQHHFEQHLLTDYLAIRLVVEQLLVGDEFKSVTKDCESRSENWFKQTVASLCYYSDMPSDVLLQHDVNEIQTFIHFAATMNKNVFKNLWLIAWEMTYESQLKQKIKAGHESVAGALDVNQVNVSENDNANQPHSVLLNDTQAVDENNSELNQVGTSTKAQIAFCIDVRSEPFRRHIEAAGPFETIGIAGFFGLPIQKDAVDEQFKHDSLPVMVPPAYRIKEFADRYDMNVYRQQQQTMSSMFYTFKLMKNNVMPSLLLPELSGPFLSLSTIVNSIMPRKSRASLQKIKQKWLKKPETKLTIDREFDRTSDLPVGFTEQEQIDFALQALKLMDLTEAFAPFVVLAGHASHSHNNPHHASLECGACGGASSGFNAKLLAMICNRPNVRQGLKQSGVYIPETTVFAAAEHHTSTDTLAWVYVPDTLSALALDAYESLNDAMPMISEQANRERLDKLPTIGRVNHPVEEAQRFASDWSEVRPEWGLAKNASFIIGRRQLTKGIDLEGRTFLHNYDWRKDKDGKLLNTIISGPALVAQWINLQYYASTVAPHFYGSGNKATQTVTSGVGVMQGNASDLMYGLSWQSVMAADRTMYHSPIRLLVVIQAPDYVVARLFANNEHFARKVSNHWLRLMSVNEEGRFKSWI.

Residues C424, D426, H606, and C621 each contribute to the Zn(2+) site.

Belongs to the inorganic carbon transporter (TC 9.A.2) DabA family. In terms of assembly, forms a complex with DabB. Requires Zn(2+) as cofactor.

It localises to the cell membrane. Its function is as follows. Part of an energy-coupled inorganic carbon pump. The chain is Probable inorganic carbon transporter subunit DabA from Staphylococcus aureus (strain Mu3 / ATCC 700698).